The chain runs to 688 residues: DNA-directed RNA polymerase subunit beta' (688 aa).

Residues Cys-69, Cys-71, Cys-87, and Cys-90 each coordinate Zn(2+). 3 residues coordinate Mg(2+): Asp-489, Asp-491, and Asp-493.

This sequence belongs to the RNA polymerase beta' chain family. RpoC1 subfamily. In terms of assembly, in plastids the minimal PEP RNA polymerase catalytic core is composed of four subunits: alpha, beta, beta', and beta''. When a (nuclear-encoded) sigma factor is associated with the core the holoenzyme is formed, which can initiate transcription. Requires Mg(2+) as cofactor. The cofactor is Zn(2+).

The protein resides in the plastid. Its subcellular location is the chloroplast. It carries out the reaction RNA(n) + a ribonucleoside 5'-triphosphate = RNA(n+1) + diphosphate. DNA-dependent RNA polymerase catalyzes the transcription of DNA into RNA using the four ribonucleoside triphosphates as substrates. This chain is DNA-directed RNA polymerase subunit beta', found in Piper cenocladum (Ant piper).